The chain runs to 2046 residues: Protein TIC 214 (2046 aa).

6 helical membrane passes run 18 to 38 (VSGPIILFGLYYGFIATLPFG), 54 to 74 (LYGIIAISGSITGQLIVFLSM), 79 to 99 (IYAALWKPHAITLLVIPYTFC), 125 to 145 (ILSLFMGGLILQLLNPILLAN), 163 to 183 (ISFMISSFCGWLGGHILFINL), and 214 to 234 (TFSVLLISYFSFYLGRSPLIF). Disordered regions lie at residues 278–299 (DEDRSVAMAKKGRSVAEDEDRS), 320–472 (ARSV…VPRE), and 1833–1898 (AKDS…EDEI). Basic and acidic residues-rich tracts occupy residues 322–335 (SVAEDKDPEDEHRS), 344–368 (SVAEDKDPEDEHRSVAMAKKDRSVA), and 378–457 (AKKD…RSVA). The span at 1833-1866 (AKDSNANDINAKDSNANDINANDSNAKDSNANDI) shows a compositional bias: low complexity. Basic and acidic residues predominate over residues 1882–1898 (NAKDSNADVPKKKEDEI).

It belongs to the TIC214 family. In terms of assembly, part of the Tic complex.

The protein resides in the plastid. It localises to the chloroplast inner membrane. Involved in protein precursor import into chloroplasts. May be part of an intermediate translocation complex acting as a protein-conducting channel at the inner envelope. The chain is Protein TIC 214 from Pinus koraiensis (Korean pine).